The sequence spans 684 residues: Sec1 family domain-containing protein 2 (684 aa).

Belongs to the STXBP/unc-18/SEC1 family.

Functionally, may be involved in protein transport. The polypeptide is Sec1 family domain-containing protein 2 (Scfd2) (Mus musculus (Mouse)).